Here is a 26-residue protein sequence, read N- to C-terminus: Delta-conotoxin Am2766 (26 aa).

Disulfide bonds link Cys-1-Cys-16, Cys-8-Cys-20, and Cys-15-Cys-24. Glu-26 carries the glutamic acid 1-amide modification.

As to expression, expressed by the venom duct.

The protein localises to the secreted. Functionally, delta-conotoxins bind to site 6 of voltage-gated sodium channels (Nav) and inhibit the inactivation process. The protein is Delta-conotoxin Am2766 of Conus amadis (Amadis cone).